The primary structure comprises 101 residues: NADH-quinone oxidoreductase subunit K (101 aa).

The next 3 membrane-spanning stretches (helical) occupy residues Leu4–Leu24, Ile29–Ala49, and Ile61–Leu81.

It belongs to the complex I subunit 4L family. In terms of assembly, NDH-1 is composed of 14 different subunits. Subunits NuoA, H, J, K, L, M, N constitute the membrane sector of the complex.

It localises to the cell inner membrane. It catalyses the reaction a quinone + NADH + 5 H(+)(in) = a quinol + NAD(+) + 4 H(+)(out). Functionally, NDH-1 shuttles electrons from NADH, via FMN and iron-sulfur (Fe-S) centers, to quinones in the respiratory chain. The immediate electron acceptor for the enzyme in this species is believed to be ubiquinone. Couples the redox reaction to proton translocation (for every two electrons transferred, four hydrogen ions are translocated across the cytoplasmic membrane), and thus conserves the redox energy in a proton gradient. The chain is NADH-quinone oxidoreductase subunit K from Burkholderia ambifaria (strain MC40-6).